A 153-amino-acid polypeptide reads, in one-letter code: uncharacterized protein (153 aa).

A signal peptide spans 1-22 (MKLLKKGTTVLFVMIMAVMLVA). Residue Cys-23 is the site of N-palmitoyl cysteine attachment. Cys-23 is lipidated: S-diacylglycerol cysteine. The interval 121–153 (LPGMASTGDVSKGISMKESEKMLKSQGFKEVEK) is disordered. The span at 135 to 153 (SMKESEKMLKSQGFKEVEK) shows a compositional bias: basic and acidic residues.

To E.coli YehR.

It localises to the cell membrane. This is an uncharacterized protein from Listeria innocua serovar 6a (strain ATCC BAA-680 / CLIP 11262).